Reading from the N-terminus, the 463-residue chain is 23S rRNA (uracil(1939)-C(5))-methyltransferase RlmD (463 aa).

A TRAM domain is found at 8-76 (RSKSATVYTF…KRFEEGELIE (69 aa)). Residues cysteine 90, cysteine 96, cysteine 99, and cysteine 178 each contribute to the [4Fe-4S] cluster site. Residues glutamine 288, phenylalanine 317, asparagine 322, glutamate 341, aspartate 368, and aspartate 389 each contribute to the S-adenosyl-L-methionine site. Cysteine 415 (nucleophile) is an active-site residue.

The protein belongs to the class I-like SAM-binding methyltransferase superfamily. RNA M5U methyltransferase family. RlmD subfamily.

The catalysed reaction is uridine(1939) in 23S rRNA + S-adenosyl-L-methionine = 5-methyluridine(1939) in 23S rRNA + S-adenosyl-L-homocysteine + H(+). Catalyzes the formation of 5-methyl-uridine at position 1939 (m5U1939) in 23S rRNA. This Acinetobacter baylyi (strain ATCC 33305 / BD413 / ADP1) protein is 23S rRNA (uracil(1939)-C(5))-methyltransferase RlmD.